We begin with the raw amino-acid sequence, 535 residues long: Light-independent protochlorophyllide reductase subunit B (535 aa).

Asp36 contacts [4Fe-4S] cluster. Residue Asp292 is the Proton donor of the active site. 428–429 (GL) lines the substrate pocket. Residues 447-483 (SDDAAKAEPDQPVSNAHGHTESKTVSQGEPIASDEGG) are disordered.

This sequence belongs to the ChlB/BchB/BchZ family. In terms of assembly, protochlorophyllide reductase is composed of three subunits; BchL, BchN and BchB. Forms a heterotetramer of two BchB and two BchN subunits. The cofactor is [4Fe-4S] cluster.

It catalyses the reaction chlorophyllide a + oxidized 2[4Fe-4S]-[ferredoxin] + 2 ADP + 2 phosphate = protochlorophyllide a + reduced 2[4Fe-4S]-[ferredoxin] + 2 ATP + 2 H2O. It participates in porphyrin-containing compound metabolism; bacteriochlorophyll biosynthesis (light-independent). In terms of biological role, component of the dark-operative protochlorophyllide reductase (DPOR) that uses Mg-ATP and reduced ferredoxin to reduce ring D of protochlorophyllide (Pchlide) to form chlorophyllide a (Chlide). This reaction is light-independent. The NB-protein (BchN-BchB) is the catalytic component of the complex. The polypeptide is Light-independent protochlorophyllide reductase subunit B (Chlorobium phaeobacteroides (strain DSM 266 / SMG 266 / 2430)).